The chain runs to 75 residues: RNA-binding protein Hfq (75 aa).

A Sm domain is found at 9–69 (DQFLNQLRKE…ISTFAPERNI (61 aa)).

Belongs to the Hfq family. As to quaternary structure, homohexamer.

Its function is as follows. RNA chaperone that binds small regulatory RNA (sRNAs) and mRNAs to facilitate mRNA translational regulation in response to envelope stress, environmental stress and changes in metabolite concentrations. Also binds with high specificity to tRNAs. The sequence is that of RNA-binding protein Hfq from Geobacillus kaustophilus (strain HTA426).